The primary structure comprises 297 residues: Mitochondrial thiamine pyrophosphate carrier 1 (297 aa).

Solcar repeat units lie at residues 13–94 (SHVF…TNAA), 102–195 (PPTI…IRAR), and 196–295 (WPET…LMRV). 6 helical membrane passes run 19 to 36 (LVSG…IAPL), 75 to 91 (IMYI…YSYT), 109 to 128 (LAGA…FDVL), 163 to 187 (GLGG…AMFG), 203 to 219 (TAGA…TFPL), and 270 to 287 (GIGL…INLW).

It belongs to the mitochondrial carrier (TC 2.A.29) family.

It localises to the mitochondrion inner membrane. In terms of biological role, mitochondrial transporter that mediates uptake of thiamine pyrophosphate (ThPP) into mitochondria. This chain is Mitochondrial thiamine pyrophosphate carrier 1 (TPC1), found in Vanderwaltozyma polyspora (strain ATCC 22028 / DSM 70294 / BCRC 21397 / CBS 2163 / NBRC 10782 / NRRL Y-8283 / UCD 57-17) (Kluyveromyces polysporus).